Here is a 287-residue protein sequence, read N- to C-terminus: ATP synthase gamma chain (287 aa).

Belongs to the ATPase gamma chain family. In terms of assembly, F-type ATPases have 2 components, CF(1) - the catalytic core - and CF(0) - the membrane proton channel. CF(1) has five subunits: alpha(3), beta(3), gamma(1), delta(1), epsilon(1). CF(0) has three main subunits: a, b and c.

It is found in the cell membrane. Functionally, produces ATP from ADP in the presence of a proton gradient across the membrane. The gamma chain is believed to be important in regulating ATPase activity and the flow of protons through the CF(0) complex. The chain is ATP synthase gamma chain from Halothermothrix orenii (strain H 168 / OCM 544 / DSM 9562).